The sequence spans 238 residues: Triosephosphate isomerase (238 aa).

7–9 serves as a coordination point for substrate; that stretch reads NFK. Residue His-91 is the Electrophile of the active site. Glu-158 serves as the catalytic Proton acceptor. Substrate is bound by residues Gly-164 and Ser-200.

The protein belongs to the triosephosphate isomerase family. As to quaternary structure, homodimer.

The protein resides in the cytoplasm. The enzyme catalyses D-glyceraldehyde 3-phosphate = dihydroxyacetone phosphate. The protein operates within carbohydrate biosynthesis; gluconeogenesis. Its pathway is carbohydrate degradation; glycolysis; D-glyceraldehyde 3-phosphate from glycerone phosphate: step 1/1. Its function is as follows. Involved in the gluconeogenesis. Catalyzes stereospecifically the conversion of dihydroxyacetone phosphate (DHAP) to D-glyceraldehyde-3-phosphate (G3P). The protein is Triosephosphate isomerase of Ureaplasma parvum serovar 3 (strain ATCC 27815 / 27 / NCTC 11736).